Consider the following 70-residue polypeptide: DNA-directed RNA polymerase subunit omega (70 aa).

This sequence belongs to the RNA polymerase subunit omega family. In terms of assembly, the RNAP catalytic core consists of 2 alpha, 1 beta, 1 beta' and 1 omega subunit. When a sigma factor is associated with the core the holoenzyme is formed, which can initiate transcription.

The catalysed reaction is RNA(n) + a ribonucleoside 5'-triphosphate = RNA(n+1) + diphosphate. Promotes RNA polymerase assembly. Latches the N- and C-terminal regions of the beta' subunit thereby facilitating its interaction with the beta and alpha subunits. This chain is DNA-directed RNA polymerase subunit omega, found in Bacillus cytotoxicus (strain DSM 22905 / CIP 110041 / 391-98 / NVH 391-98).